We begin with the raw amino-acid sequence, 2718 residues long: E3 SUMO-protein ligase RanBP2 (2718 aa).

The interval 1-100 (MFTTRKEVDA…DPRQSEVVID (100 aa)) is sufficient for interaction with Hsp83. A sufficient for interaction with piwi region spans residues 1 to 200 (MFTTRKEVDA…EKMKIDQAFN (200 aa)). 2 TPR repeats span residues 26 to 58 (DIKG…VRDD) and 59 to 94 (AVGH…DPRQ). 2 disordered regions span residues 796 to 816 (QQDR…VHNN) and 937 to 959 (EHQQ…HPVV). A compositionally biased stretch (polar residues) spans 803-816 (GIDNSFGSPDVHNN). Copy 1 of the repeat occupies 808-809 (FG). The interval 808–2581 (FGSPDVHNNS…GEENETKLFG (1774 aa)) is 27 X 2 AA repeats of F-G. Low complexity predominate over residues 938-948 (HQQQQQHQQQQ). Repeat copies occupy residues 1028 to 1029 (FG), 1035 to 1036 (FG), and 1104 to 1105 (FG). The tract at residues 1181–1208 (QPVEKEPPANVVITSSDPLPKPTTASVQ) is disordered. Polar residues predominate over residues 1192 to 1208 (VITSSDPLPKPTTASVQ). Copy 5 of the repeat occupies 1252–1253 (FG). 2 disordered regions span residues 1263–1314 (FKTQ…KPII) and 1483–1502 (NKPQ…ATAA). Polar residues predominate over residues 1284-1299 (NQSGATDPNKTLPQDT). One can recognise a RanBD1 1 domain in the interval 1309-1445 (DFKPIIPLPD…FTKASEAAKS (137 aa)). Residues 1483-1493 (NKPQEQTKTQP) are compositionally biased toward polar residues. A run of 4 repeats spans residues 1506–1507 (FG), 1539–1540 (FG), 1547–1548 (FG), and 1552–1553 (FG). Residues 1605–1742 (QFVPVIALPD…VQKAQQSIGN (138 aa)) form the RanBD1 2 domain. The disordered stretch occupies residues 1738-1761 (QSIGNEPKKEEVPSAAGEKEKPIK). Basic and acidic residues predominate over residues 1743–1760 (EPKKEEVPSAAGEKEKPI). Copy 10 of the repeat occupies 1763–1764 (FG). A RanBP2-type 1 zinc finger spans residues 1770 to 1799 (KAGSWNCQACYTNNGQDQLYCLACQEPKDA). 4 tandem repeats follow at residues 1826–1827 (FG), 1842–1843 (FG), 1874–1875 (FG), and 1883–1884 (FG). The RanBP2-type 2 zinc-finger motif lies at 1890 to 1919 (AVGSWSCSACYVNNPGESLYCSACDAPKND). Tandem repeats lie at residues 1942-1943 (FG) and 1944-1945 (FG). Disordered regions lie at residues 1981–2021 (FTFS…TYFS), 2154–2204 (EDSP…THEV), and 2239–2273 (SLSR…KDAG). The segment covering 2002 to 2016 (EDEDNDSQEVEEEEN) has biased composition (acidic residues). Positions 2019–2151 (YFSPVIPLPD…IKNALNETAK (133 aa)) constitute a RanBD1 3 domain. Residues 2161 to 2175 (SVSQSTEANKPSQKN) are compositionally biased toward polar residues. The segment covering 2239-2257 (SLSRNNSSASEASKTPSSA) has biased composition (low complexity). Repeat copies occupy residues 2260–2261 (FG), 2313–2314 (FG), 2332–2333 (FG), 2352–2353 (FG), 2360–2361 (FG), 2366–2367 (FG), 2393–2394 (FG), 2399–2400 (FG), 2415–2416 (FG), 2421–2422 (FG), and 2580–2581 (FG). Positions 2320 to 2346 (AEQQKKDSSESVFGGNKADSQSPATQE) are disordered. Residues 2556–2699 (HYDAIVELPD…VNSCIKRAKA (144 aa)) enclose the RanBD1 4 domain.

The protein belongs to the RanBP2 E3 ligase family. In terms of assembly, part of the nuclear pore complex. Forms a complex with Nxt1, sbr/Nxf1 and RanGAP. Interacts (via TPR repeats) with Hsp83; the interaction is required for the nuclear import of the sesquiterpenoid juvenile hormone receptor Met. Interacts (via N-terminus) with piwi. As to expression, expressed in both oocytes and nurse cells (at protein level).

The protein resides in the nucleus. Its subcellular location is the nuclear pore complex. In terms of biological role, E3 SUMO-protein ligase. Component of the nuclear pore complex (NPC), a complex required for trafficking across the nuclear envelope. Required for nuclear import of nuclear localization signal (NLS)-containing proteins in an importin alpha/importin beta-dependent manner, but also for the nuclear import of specific proteins such as phosphorylated Mad or the sesquiterpenoid juvenile hormone receptor Met as part of the juvenile hormone signal transduction pathway. Plays a role in nuclear mRNA export by recruiting the mRNA transport complex composed of Nxt1 and sbr/Nxf1 to the NPC. Essential during germline development for transposon silencing and piRNA biogenesis probably by regulating piwi localization to the nucleus. During oogenesis, required to form granules that modulate the biogenesis of annulate lamellae containing nuclear pore complex components. The chain is E3 SUMO-protein ligase RanBP2 from Drosophila melanogaster (Fruit fly).